A 344-amino-acid polypeptide reads, in one-letter code: Putative replication factor C small subunit L499 (344 aa).

Gly-57–Thr-64 is a binding site for ATP.

Belongs to the activator 1 small subunits family. RfcS subfamily.

Part of the RFC clamp loader complex which loads the PCNA sliding clamp onto DNA. The sequence is that of Putative replication factor C small subunit L499 from Acanthamoeba polyphaga mimivirus (APMV).